We begin with the raw amino-acid sequence, 333 residues long: Dehydrodolichyl diphosphate synthase complex subunit DHDDS (333 aa).

(2E,6E)-farnesyl diphosphate-binding residues include Asp34, Gly35, Arg37, Arg38, and Arg85. Isopentenyl diphosphate is bound by residues Asp34, Gly35, Arg37, Arg38, Arg85, Arg205, Arg211, and Ser213. Position 34 (Asp34) interacts with Mg(2+).

It belongs to the UPP synthase family. The active dehydrodolichyl diphosphate synthase complex is a heterotetramer composed of a dimer of heterodimer of DHDDS and NUS1. Interacts with NPC2. Mg(2+) serves as cofactor. In terms of tissue distribution, ubiquitous. Expressed at high levels in testis and kidney. Expressed in epididymis (at protein level).

It localises to the endoplasmic reticulum membrane. The catalysed reaction is n isopentenyl diphosphate + (2E,6E)-farnesyl diphosphate = a di-trans,poly-cis-polyprenyl diphosphate + n diphosphate. The protein operates within protein modification; protein glycosylation. It functions in the pathway lipid metabolism. With respect to regulation, activated by phospholipids including cardiolipin, phosphatidylcholine, phosphatidylethanolamine, phosphatidylinositol and phosphatidylserine. In terms of biological role, with NUS1, forms the dehydrodolichyl diphosphate synthase (DDS) complex, an essential component of the dolichol monophosphate (Dol-P) biosynthetic machinery. Both subunits contribute to enzymatic activity, i.e. condensation of multiple copies of isopentenyl pyrophosphate (IPP) to farnesyl pyrophosphate (FPP) to produce dehydrodolichyl diphosphate (Dedol-PP), a precursor of dolichol phosphate which is utilized as a sugar carrier in protein glycosylation in the endoplasmic reticulum (ER). Synthesizes long-chain polyprenols, mostly of C95 and C100 chain length. Regulates the glycosylation and stability of nascent NPC2, thereby promoting trafficking of LDL-derived cholesterol. This is Dehydrodolichyl diphosphate synthase complex subunit DHDDS from Homo sapiens (Human).